We begin with the raw amino-acid sequence, 549 residues long: Solute carrier family 22 member 6 (549 aa).

At 1–23 (MAFNDLLLQLGGVGRFQKIQVTL) the chain is on the cytoplasmic side. Residues 24–44 (VILPLILLASHNTLQNFTAAI) traverse the membrane as a helical segment. Residues 45–135 (PTHHCRPPAD…LVCSHRALRQ (91 aa)) lie on the Extracellular side of the membrane. Asparagine 56, asparagine 92, and asparagine 113 each carry an N-linked (GlcNAc...) asparagine glycan. The chain crosses the membrane as a helical span at residues 136–156 (LAQSLYMMGVLLGAMTFGCLA). The Cytoplasmic portion of the chain corresponds to 157-164 (DRLGRRKV). Residues 165–185 (LIFNYLQTAVSGTCAAFAPNF) form a helical membrane-spanning segment. Residues 186 to 195 (PAYCAFRFLS) are Extracellular-facing. Residues 196–216 (GMSTAGVVLNCMTLNVEWMPI) traverse the membrane as a helical segment. Residues 217–224 (HTRAYVGT) lie on the Cytoplasmic side of the membrane. A helical membrane pass occupies residues 225–245 (LTGYVYSLGQFLLAGMAYAVP). Topologically, residues 246–248 (HWR) are extracellular. A helical membrane pass occupies residues 249–269 (YLQLLVSAPFFAFFIYSWFFI). Residues 270–337 (ESARWYASSG…ELIRCPALRR (68 aa)) lie on the Cytoplasmic side of the membrane. The helical transmembrane segment at 338–358 (LFLCLSMLWFATSFAYYGLVM) threads the bilayer. Residues 359 to 368 (DLQGFGVSIY) lie on the Extracellular side of the membrane. The helical transmembrane segment at 369 to 389 (LIQVIFGAVDLPAKLVSFLVI) threads the bilayer. Topologically, residues 390-395 (NNVGRR) are cytoplasmic. A helical transmembrane segment spans residues 396–416 (PAQMASLLLAGICILINGVVP). Residues 417-425 (KDKSIVRTS) lie on the Extracellular side of the membrane. The helical transmembrane segment at 426 to 446 (LAVLGKGCLASSFNCIFLYTG) threads the bilayer. The Cytoplasmic segment spans residues 447-456 (EVYPTMIRQT). The chain crosses the membrane as a helical span at residues 457 to 477 (GLGMGSTLARVGSIVSPLVSM). Topologically, residues 478-484 (TAELYPS) are extracellular. The helical transmembrane segment at 485-505 (VPLFIYGAVPVAASAAIALLP) threads the bilayer. Topologically, residues 506–549 (ETLGQPLPDTVQDVENRRRGKTRKQQEELQKQMVPLQASAQVKN) are cytoplasmic. The segment at 521–549 (NRRRGKTRKQQEELQKQMVPLQASAQVKN) is disordered.

This sequence belongs to the major facilitator (TC 2.A.1) superfamily. Organic cation transporter (TC 2.A.1.19) family. In terms of processing, glycosylated. Glycosylation is necessary for proper targeting of the transporter to the plasma membrane.

Its subcellular location is the basolateral cell membrane. The protein localises to the basal cell membrane. The catalysed reaction is (6R)-L-erythro-5,6,7,8-tetrahydrobiopterin(out) + a dicarboxylate(in) = (6R)-L-erythro-5,6,7,8-tetrahydrobiopterin(in) + a dicarboxylate(out). The enzyme catalyses L-erythro-7,8-dihydrobiopterin(out) + a dicarboxylate(in) = L-erythro-7,8-dihydrobiopterin(in) + a dicarboxylate(out). It carries out the reaction L-sepiapterin(out) + a dicarboxylate(in) = L-sepiapterin(in) + a dicarboxylate(out). It catalyses the reaction prostaglandin F2alpha(out) + a dicarboxylate(in) = prostaglandin F2alpha(in) + a dicarboxylate(out). The catalysed reaction is prostaglandin E2(out) + a dicarboxylate(in) = prostaglandin E2(in) + a dicarboxylate(out). The enzyme catalyses 3',5'-cyclic AMP(out) + a dicarboxylate(in) = 3',5'-cyclic AMP(in) + a dicarboxylate(out). It carries out the reaction 3',5'-cyclic GMP(out) + a dicarboxylate(in) = 3',5'-cyclic GMP(in) + a dicarboxylate(out). It catalyses the reaction urate(out) + a dicarboxylate(in) = urate(in) + a dicarboxylate(out). The catalysed reaction is kynurenate(out) + glutarate(in) = kynurenate(in) + glutarate(out). The enzyme catalyses (indol-3-yl)acetate(out) + a dicarboxylate(in) = (indol-3-yl)acetate(in) + a dicarboxylate(out). It carries out the reaction indoxyl sulfate(out) + a dicarboxylate(in) = indoxyl sulfate(in) + a dicarboxylate(out). It catalyses the reaction N-benzoylglycine(out) + a dicarboxylate(in) = N-benzoylglycine(in) + a dicarboxylate(out). The catalysed reaction is 3-carboxy-4-methyl-5-propyl-2-furanpropanoate(out) + a dicarboxylate(in) = 3-carboxy-4-methyl-5-propyl-2-furanpropanoate(in) + a dicarboxylate(out). Secondary active transporter that functions as a Na(+)-independent organic anion (OA)/dicarboxylate antiporter where the uptake of one molecule of OA into the cell is coupled with an efflux of one molecule of intracellular dicarboxylate such as 2-oxoglutarate or glutarate. Mediates the uptake of OA across the basolateral side of proximal tubule epithelial cells, thereby contributing to the renal elimination of endogenous OA from the systemic circulation into the urine. Functions as a biopterin transporters involved in the uptake and the secretion of coenzymes tetrahydrobiopterin (BH4), dihydrobiopterin (BH2) and sepiapterin to urine, thereby determining baseline levels of blood biopterins. Transports prostaglandin E2 (PGE2) and prostaglandin F2-alpha (PGF2-alpha) and may contribute to their renal excretion. Also mediates the uptake of cyclic nucleotides such as cAMP and cGMP. Involved in the transport of neuroactive tryptophan metabolites kynurenate (KYNA) and xanthurenate (XA) and may contribute to their secretion from the brain. May transport glutamate. Also involved in the disposition of uremic toxins and potentially toxic xenobiotics by the renal organic anion secretory pathway, helping reduce their undesired toxicological effects on the body. Uremic toxins include the indoxyl sulfate (IS), hippurate/N-benzoylglycine (HA), indole acetate (IA), 3-carboxy-4- methyl-5-propyl-2-furanpropionate (CMPF) and urate. Xenobiotics include the mycotoxin ochratoxin (OTA). May also contribute to the transport of organic compounds in testes across the blood-testis-barrier. In Bos taurus (Bovine), this protein is Solute carrier family 22 member 6.